Here is a 203-residue protein sequence, read N- to C-terminus: LexA repressor (203 aa).

The segment at residues 28–47 is a DNA-binding region (H-T-H motif); the sequence is IREIGDEFGITAKGAYDHLK. Residues S127 and K164 each act as for autocatalytic cleavage activity in the active site.

The protein belongs to the peptidase S24 family. As to quaternary structure, homodimer.

The enzyme catalyses Hydrolysis of Ala-|-Gly bond in repressor LexA.. Its function is as follows. Represses a number of genes involved in the response to DNA damage (SOS response), including recA and lexA. In the presence of single-stranded DNA, RecA interacts with LexA causing an autocatalytic cleavage which disrupts the DNA-binding part of LexA, leading to derepression of the SOS regulon and eventually DNA repair. The sequence is that of LexA repressor from Leptospira borgpetersenii serovar Hardjo-bovis (strain JB197).